A 395-amino-acid polypeptide reads, in one-letter code: Putative phosphatidate cytidylyltransferase (395 aa).

9 consecutive transmembrane segments (helical) span residues 13 to 33 (STVF…SAFA), 78 to 98 (FAFG…MNWE), 115 to 135 (SLLS…VIYF), 144 to 164 (WIWT…YMIS), 177 to 197 (IYSL…YFSV), 201 to 221 (WTTI…AYLF), 242 to 262 (AFFG…LYSI), 306 to 326 (FYIY…IFAI), and 358 to 378 (FDSS…AGIS).

Belongs to the CDS family.

It is found in the cell membrane. The catalysed reaction is a 1,2-diacyl-sn-glycero-3-phosphate + CTP + H(+) = a CDP-1,2-diacyl-sn-glycerol + diphosphate. It participates in phospholipid metabolism; CDP-diacylglycerol biosynthesis; CDP-diacylglycerol from sn-glycerol 3-phosphate: step 3/3. The protein is Putative phosphatidate cytidylyltransferase (cdsA) of Mycoplasma pneumoniae (strain ATCC 29342 / M129 / Subtype 1) (Mycoplasmoides pneumoniae).